Consider the following 377-residue polypeptide: Ribosomal RNA large subunit methyltransferase G (377 aa).

The protein belongs to the methyltransferase superfamily. RlmG family.

It localises to the cytoplasm. It carries out the reaction guanosine(1835) in 23S rRNA + S-adenosyl-L-methionine = N(2)-methylguanosine(1835) in 23S rRNA + S-adenosyl-L-homocysteine + H(+). Specifically methylates the guanine in position 1835 (m2G1835) of 23S rRNA. This Shewanella sp. (strain MR-4) protein is Ribosomal RNA large subunit methyltransferase G.